We begin with the raw amino-acid sequence, 93 residues long: Protein FMP16, mitochondrial (93 aa).

Residues 1-25 constitute a mitochondrion transit peptide; sequence MLRTTFLRTPRQLMRKSPRASFSIV. The disordered stretch occupies residues 30–93; that stretch reads FPHLKNNQDE…EQNRPDDGVY (64 aa). A compositionally biased stretch (basic and acidic residues) spans 35 to 93; the sequence is NNQDEAEKKEQGLFDSNKKRLDTLEHGKNPDYKQPGMEDLKKKGDDARIEQNRPDDGVY.

Its subcellular location is the mitochondrion. This is Protein FMP16, mitochondrial (FMP16) from Saccharomyces cerevisiae (strain ATCC 204508 / S288c) (Baker's yeast).